Consider the following 757-residue polypeptide: Lysyl oxidase homolog 4 (757 aa).

An N-terminal signal peptide occupies residues 1–25; sequence MMWPQPPTFSLFLLLLLSQAPSSRP. SRCR domains are found at residues 33–134, 160–288, 312–412, and 422–530; these read LRLV…VVCH, VRLK…VSCV, VRLR…VRCN, and VRLA…VACM. Disulfide bonds link C59–C123, C72–C133, C103–C113, C192–C277, C205–C287, C252–C262, C337–C401, C350–C411, C381–C391, C451–C516, C464–C529, C498–C508, C559–C565, C611–C659, C643–C649, C671–C681, and C718–C732. N199 carries an N-linked (GlcNAc...) asparagine glycan. The interval 534–737 is lysyl-oxidase like; sequence PDLVMNAQLV…WLHNCHTGDS (204 aa). Cu cation is bound by residues H612, H614, and H616. N630 carries an N-linked (GlcNAc...) asparagine glycan. A cross-link (lysine tyrosylquinone (Lys-Tyr)) is located at residues 639-675; the sequence is KASFCLEDTNCPSGVQRRYACANFGEQGVAVGCWDTY. 2',4',5'-topaquinone is present on Y675.

It belongs to the lysyl oxidase family. Requires Cu cation as cofactor. Lysine tyrosylquinone residue serves as cofactor. The lysine tyrosylquinone cross-link (LTQ) is generated by condensation of the epsilon-amino group of a lysine with a topaquinone produced by oxidation of tyrosine. Post-translationally, may be proteolytically cleaved by BMP1.

It localises to the secreted. The protein localises to the extracellular space. The catalysed reaction is L-lysyl-[protein] + O2 + H2O = (S)-2-amino-6-oxohexanoyl-[protein] + H2O2 + NH4(+). In terms of biological role, catalyzes the oxidative deamination of lysine and hydroxylysine residues in collagen and elastin, resulting in the formation of covalent cross-linkages, and the stabilization of collagen and elastin fibers. This is Lysyl oxidase homolog 4 (Loxl4) from Mus musculus (Mouse).